The chain runs to 360 residues: DNA replication and repair protein RecF (360 aa).

30–37 is an ATP binding site; that stretch reads GQNGSGKT.

This sequence belongs to the RecF family.

It is found in the cytoplasm. In terms of biological role, the RecF protein is involved in DNA metabolism; it is required for DNA replication and normal SOS inducibility. RecF binds preferentially to single-stranded, linear DNA. It also seems to bind ATP. This Shewanella sp. (strain MR-7) protein is DNA replication and repair protein RecF.